Here is a 1003-residue protein sequence, read N- to C-terminus: Glutamate receptor ionotropic, NMDA 3B (1003 aa).

The first 24 residues, 1 to 24, serve as a signal peptide directing secretion; it reads MECVQTLWLSLALALARGSWVVRG. Residues 25 to 574 lie on the Extracellular side of the membrane; sequence HPQPCGVPTR…PIGAFMWPLH (550 aa). 5 N-linked (GlcNAc...) asparagine glycosylation sites follow: asparagine 69, asparagine 212, asparagine 344, asparagine 451, and asparagine 465. Intrachain disulfides connect cysteine 439–cysteine 475 and cysteine 445–cysteine 476. Residues serine 531, serine 533, and arginine 538 each contribute to the glycine site. 2 residues coordinate D-serine: serine 533 and arginine 538. The helical transmembrane segment at 575 to 594 threads the bilayer; the sequence is WSMWVGVFAALHLTALFLTL. The Cytoplasmic segment spans residues 595-615; that stretch reads YEWRSPYGLTPRGRNRGTVFS. The segment at residues 616–627 is an intramembrane region (discontinuously helical); it reads YSSALNLCYAIL. Topologically, residues 628 to 641 are cytoplasmic; it reads FGRTVSSKTPKCPT. A helical membrane pass occupies residues 642–661; sequence GRFLMNLWAIFCLLVLSSYT. The Extracellular segment spans residues 662–832; the sequence is ANLAAVMVGD…TLQMGVYHLS (171 aa). Serine 701 is a binding site for glycine. Residues serine 701, alanine 702, and aspartate 745 each contribute to the D-serine site. A glycine-binding site is contributed by aspartate 745. Asparagine 786 carries N-linked (GlcNAc...) asparagine glycosylation. Residues 833–848 form a helical membrane-spanning segment; it reads GLFVLLCLGLGSALLT. The Cytoplasmic segment spans residues 849–1003; it reads SLGEHVFYRL…RLLHAAPAES (155 aa). Residues 883-912 form a disordered region; it reads LNTGPPEGQQERAEQECSGPKEEQPAADGA. The segment covering 891-906 has biased composition (basic and acidic residues); it reads QQERAEQECSGPKEEQ. Residues 947–986 adopt a coiled-coil conformation; that stretch reads SNGPGVQAELRELELRIEAARERLRSALLRRGELRAQLGD. The segment at 952–985 is involved in the trafficking and surface expression of NMDARs; that stretch reads VQAELRELELRIEAARERLRSALLRRGELRAQLG.

It belongs to the glutamate-gated ion channel (TC 1.A.10.1) family. NR3B/GRIN3B subfamily. In terms of assembly, forms heterotetrameric channels that contain at least two GluN1 subunits and at least a combination of one GluN2 and one GluN3 subunits (in vitro). Forms heterotetrameric channels composed of two GluN1/zeta subunits (GRIN1), and two identical GluN3 subunits (GRIN3A or GRIN3B) (in vitro). Does not form functional homomeric channels. As to expression, expressed in the facial nucleus and the ambiguus nucleus of the brainstem, pons, medulla, spinal cord and cerebellum.

It is found in the cell membrane. The protein resides in the postsynaptic cell membrane. It catalyses the reaction Ca(2+)(in) = Ca(2+)(out). It carries out the reaction Na(+)(in) = Na(+)(out). Functionally, component of a non-conventional N-methyl-D-aspartate (NMDA) receptors (NMDARs) that function as heterotetrameric, ligand-gated cation channels with low calcium permeability and low voltage-dependent block by Mg(2+). Forms glutamatergic receptor complexes with GluN1 and GluN2 subunits which are activated by glycine binding to the GluN1 and GluN3 subunits and L-glutamate binding to GluN2 subunits. Forms excitatory glycinergic receptor complexes with GluN1 alone which are activated by glycine binding to the GluN1 and GluN3 subunits. GluN3B subunit also binds D-serine and, in the absence of glycine, activates glycinergic receptor complexes, but with lower efficacy than glycine. Each GluN3 subunit confers differential attributes to channel properties, including activation, deactivation and desensitization kinetics, pH sensitivity, Ca2(+) permeability, and binding to allosteric modulators. The protein is Glutamate receptor ionotropic, NMDA 3B of Mus musculus (Mouse).